A 302-amino-acid polypeptide reads, in one-letter code: Lipoyl synthase (302 aa).

Cys-44, Cys-49, Cys-55, Cys-70, Cys-74, Cys-77, and Ser-283 together coordinate [4Fe-4S] cluster. The region spanning 56 to 272 (WSKKHATVMI…AKVARSKGFL (217 aa)) is the Radical SAM core domain.

Belongs to the radical SAM superfamily. Lipoyl synthase family. It depends on [4Fe-4S] cluster as a cofactor.

It is found in the cytoplasm. The catalysed reaction is [[Fe-S] cluster scaffold protein carrying a second [4Fe-4S](2+) cluster] + N(6)-octanoyl-L-lysyl-[protein] + 2 oxidized [2Fe-2S]-[ferredoxin] + 2 S-adenosyl-L-methionine + 4 H(+) = [[Fe-S] cluster scaffold protein] + N(6)-[(R)-dihydrolipoyl]-L-lysyl-[protein] + 4 Fe(3+) + 2 hydrogen sulfide + 2 5'-deoxyadenosine + 2 L-methionine + 2 reduced [2Fe-2S]-[ferredoxin]. It functions in the pathway protein modification; protein lipoylation via endogenous pathway; protein N(6)-(lipoyl)lysine from octanoyl-[acyl-carrier-protein]: step 2/2. Functionally, catalyzes the radical-mediated insertion of two sulfur atoms into the C-6 and C-8 positions of the octanoyl moiety bound to the lipoyl domains of lipoate-dependent enzymes, thereby converting the octanoylated domains into lipoylated derivatives. This Orientia tsutsugamushi (strain Boryong) (Rickettsia tsutsugamushi) protein is Lipoyl synthase.